A 479-amino-acid chain; its full sequence is Pre-glycoprotein polyprotein GP complex (479 aa).

A lipid anchor (N-myristoyl glycine; by host) is attached at Gly-2. The Extracellular portion of the chain corresponds to 2 to 17; the sequence is GQLISFFQDIPIFFEE. The helical transmembrane segment at 18–32 threads the bilayer; it reads ALNVALAVVTLLAII. Lys-33 is a topological domain (cytoplasmic). Residues 34–53 form a helical membrane-spanning segment; the sequence is GIVNVWKSGILQLFVFLVLA. Extracellular loops occupy residues 54–58 and 59–418; these read GRSCS and FKVG…TLVD. Cys-57 serves as a coordination point for Zn(2+). 3 disulfide bridges follow: Cys-85-Cys-221, Cys-265-Cys-278, and Cys-287-Cys-296. 5 N-linked (GlcNAc...) asparagine; by host glycosylation sites follow: Asn-88, Asn-125, Asn-174, Asn-202, and Asn-214. N-linked (GlcNAc...) asparagine; by host glycans are attached at residues Asn-314, Asn-351, Asn-359, Asn-376, and Asn-381. Cysteines 350 and 371 form a disulfide. Residues 419–439 form a helical membrane-spanning segment; sequence LCFWSAIFFTTSLFLHLVGFP. Over 440–479 the chain is Cytoplasmic; that stretch reads THRHIQGDPCPLPHRLDRNGACRCGRFQKLGKQVTWKRKH. The Zn(2+) site is built by His-441, His-443, Cys-449, His-453, Cys-461, Cys-463, and His-479.

The protein belongs to the arenaviridae GPC protein family. Homotetramer; disulfide-linked. As to quaternary structure, homotetramer. GP2 homotetramers bind through ionic interactions with GP1 homotetramers to form the GP complex together with the stable signal peptide. The GP-C polyprotein interacts with the host protease MBTPS1/SKI-1 resulting in the polyprotein processing. In terms of processing, specific enzymatic cleavages in vivo yield mature proteins. GP-C polyprotein is cleaved in the endoplasmic reticulum by the host protease MBTPS1. Only cleaved glycoprotein is incorporated into virions. Post-translationally, the SSP remains stably associated with the GP complex following cleavage by signal peptidase and plays crucial roles in the trafficking of GP through the secretory pathway. Myristoylation is necessary for GP2-mediated fusion activity.

Its subcellular location is the virion membrane. The protein resides in the host endoplasmic reticulum membrane. It localises to the host Golgi apparatus membrane. The protein localises to the host cell membrane. Interacts with the host receptor. Mediates virus attachment to host TFRC. This attachment induces virion internalization predominantly through clathrin-mediated endocytosis. In terms of biological role, class I viral fusion protein that directs fusion of viral and host endosomal membranes, leading to delivery of the nucleocapsid into the cytoplasm. Membrane fusion is mediated by irreversible conformational changes induced upon acidification in the endosome. Functionally, stable signal peptide (SSP): cleaved and functions as a signal peptide. In addition, it is also retained as the third component of the GP complex. The SSP is required for efficient glycoprotein expression, post-translational maturation cleavage of GP1 and GP2, glycoprotein transport to the cell surface plasma membrane, formation of infectious virus particles, and acid pH-dependent glycoprotein-mediated cell fusion. The protein is Pre-glycoprotein polyprotein GP complex of Homo sapiens (Human).